Reading from the N-terminus, the 102-residue chain is Aspartyl/glutamyl-tRNA(Asn/Gln) amidotransferase subunit C (102 aa).

The protein belongs to the GatC family. Heterotrimer of A, B and C subunits.

The enzyme catalyses L-glutamyl-tRNA(Gln) + L-glutamine + ATP + H2O = L-glutaminyl-tRNA(Gln) + L-glutamate + ADP + phosphate + H(+). It carries out the reaction L-aspartyl-tRNA(Asn) + L-glutamine + ATP + H2O = L-asparaginyl-tRNA(Asn) + L-glutamate + ADP + phosphate + 2 H(+). Allows the formation of correctly charged Asn-tRNA(Asn) or Gln-tRNA(Gln) through the transamidation of misacylated Asp-tRNA(Asn) or Glu-tRNA(Gln) in organisms which lack either or both of asparaginyl-tRNA or glutaminyl-tRNA synthetases. The reaction takes place in the presence of glutamine and ATP through an activated phospho-Asp-tRNA(Asn) or phospho-Glu-tRNA(Gln). This chain is Aspartyl/glutamyl-tRNA(Asn/Gln) amidotransferase subunit C, found in Mycobacteroides abscessus (strain ATCC 19977 / DSM 44196 / CCUG 20993 / CIP 104536 / JCM 13569 / NCTC 13031 / TMC 1543 / L948) (Mycobacterium abscessus).